A 387-amino-acid chain; its full sequence is 3-ketoacyl-CoA thiolase (387 aa).

Catalysis depends on Cys-91, which acts as the Acyl-thioester intermediate. Residues His-343 and Cys-373 each act as proton acceptor in the active site.

Belongs to the thiolase-like superfamily. Thiolase family. As to quaternary structure, heterotetramer of two alpha chains (FadB) and two beta chains (FadA).

Its subcellular location is the cytoplasm. It carries out the reaction an acyl-CoA + acetyl-CoA = a 3-oxoacyl-CoA + CoA. The protein operates within lipid metabolism; fatty acid beta-oxidation. Functionally, catalyzes the final step of fatty acid oxidation in which acetyl-CoA is released and the CoA ester of a fatty acid two carbons shorter is formed. In Shigella boydii serotype 4 (strain Sb227), this protein is 3-ketoacyl-CoA thiolase.